The sequence spans 270 residues: Cyclohexanol dehydrogenase (270 aa).

Residues R19, D40, D78, V79, N105, Y176, K180, I209, and T211 each contribute to the NAD(+) site. Residue Y176 is the Proton acceptor of the active site.

It belongs to the short-chain dehydrogenases/reductases (SDR) family. Homodimer.

Its subcellular location is the cytoplasm. The catalysed reaction is cyclohexanol + NAD(+) = cyclohexanone + NADH + H(+). Its activity is regulated as follows. Activity is enhanced by the addition of Ba(2+) and Mg(2+), but inhibited by the addition of Al(3+), Ca(2+), Co(2+), Cu(2+), Mn(2+) and Zn(2+). Functionally, catalyzes the oxidation of cyclohexanol to cyclohexanone. Can also use a broad range of other alcohols, including trans-cyclohexane-1,2-diol, trans-cyclopentane-1,2-diol, cyclopentanol, hexane-1,2-diol, ethanol, 1-propanol, 1-butanol, 1-pentanol and 1-hexanol. The polypeptide is Cyclohexanol dehydrogenase (Rhodococcus sp. (strain TK6)).